We begin with the raw amino-acid sequence, 187 residues long: Adenylate kinase (187 aa).

10–15 (GSGKGT) serves as a coordination point for ATP. The tract at residues 30–59 (STGDLLRAEVAAGSPLGLKAKEVMARGDLV) is NMP. Residues T31, R36, 57–59 (DLV), 85–88 (GYPR), and Q92 each bind AMP. Residues 126–136 (GRAKAEGREDD) form an LID region. R127 lines the ATP pocket. R133 and R144 together coordinate AMP. An ATP-binding site is contributed by G172.

Belongs to the adenylate kinase family. As to quaternary structure, monomer.

The protein localises to the cytoplasm. The catalysed reaction is AMP + ATP = 2 ADP. The protein operates within purine metabolism; AMP biosynthesis via salvage pathway; AMP from ADP: step 1/1. Catalyzes the reversible transfer of the terminal phosphate group between ATP and AMP. Plays an important role in cellular energy homeostasis and in adenine nucleotide metabolism. This is Adenylate kinase from Xanthomonas campestris pv. campestris (strain 8004).